The primary structure comprises 420 residues: Histidine--tRNA ligase (420 aa).

The protein belongs to the class-II aminoacyl-tRNA synthetase family. In terms of assembly, homodimer.

The protein localises to the cytoplasm. It catalyses the reaction tRNA(His) + L-histidine + ATP = L-histidyl-tRNA(His) + AMP + diphosphate + H(+). This chain is Histidine--tRNA ligase, found in Streptomyces avermitilis (strain ATCC 31267 / DSM 46492 / JCM 5070 / NBRC 14893 / NCIMB 12804 / NRRL 8165 / MA-4680).